A 174-amino-acid polypeptide reads, in one-letter code: Large ribosomal subunit protein uL18 (174 aa).

Belongs to the universal ribosomal protein uL18 family. Part of the 50S ribosomal subunit. Contacts the 5S and 23S rRNAs.

This is one of the proteins that bind and probably mediate the attachment of the 5S RNA into the large ribosomal subunit, where it forms part of the central protuberance. The sequence is that of Large ribosomal subunit protein uL18 from Methanosarcina barkeri (strain Fusaro / DSM 804).